The sequence spans 134 residues: Natriuretic peptides B (134 aa).

The first 26 residues, 1-26 (MDPQTAPSRALLLLLFLHLAFLGGRS), serve as a signal peptide directing secretion. S41 is a glycosylation site (O-linked (Xyl...) (chondroitin sulfate) serine). The O-linked (HexNAc...) threonine; Partial glycan is linked to T62. 2 O-linked (HexNAc...) serine glycosylation sites follow: S63 and S70. A glycan (O-linked (HexNAc...) threonine) is linked at T74. O-linked (HexNAc...) serine glycosylation is present at S79. A glycan (O-linked (HexNAc...) threonine; Partial) is linked at T84. The O-linked (HexNAc...) threonine glycan is linked to T97. A disulfide bond links C112 and C128.

The protein belongs to the natriuretic peptide family. The precursor molecule is proteolytically cleaved by the endoproteases FURIN or CORIN at Arg-102 to produce brain natriuretic peptide 32 and NT-proBNP. This likely occurs after it has been secreted into the blood, either during circulation or in the target cells. CORIN also cleaves the precursor molecule at additional residues including Arg-99 and possibly Lys-105. In patients with heart failure, processing and degradation of natriuretic peptides B occurs but is delayed, possibly due to a decrease in enzyme level or activity of CORIN and DPP4. In terms of processing, undergoes further proteolytic cleavage by various proteases such as DPP4, MME and possibly FAP, to give rise to a variety of shorter peptides. Cleaved at Pro-104 by the prolyl endopeptidase FAP (seprase) activity (in vitro). Degraded by IDE. During IDE degradation, the resulting products initially increase the activation of NPR1 and can also stimulate NPR2 to produce cGMP before the fragments are completely degraded and inactivated by IDE (in vitro). Post-translationally, O-glycosylated on at least seven residues. In cardiomyocytes, glycosylation at Thr-97 is essential for the stability and processing of the extracellular natriuretic peptides B. Glycosylation, especially at Thr-97, may also be important for brain natriuretic peptide 32 stability and/or extracellular distribution. Glycosylation at Thr-97 appears to inhibit FURIN- or CORIN-mediated proteolytic processing, at least in HEK293 cells. As to expression, detected in the cardiac atria (at protein level). Detected in the kidney distal tubular cells (at protein level).

Its subcellular location is the secreted. Functionally, cardiac hormone that plays a key role in mediating cardio-renal homeostasis. May also function as a paracrine antifibrotic factor in the heart. Acts by specifically binding and stimulating NPR1 to produce cGMP, which in turn activates effector proteins that drive various biological responses. Involved in regulating the extracellular fluid volume and maintaining the fluid-electrolyte balance through natriuresis, diuresis, vasorelaxation, and inhibition of renin and aldosterone secretion. Binds the clearance receptor NPR3. Its function is as follows. May affect cardio-renal homeostasis. Able to promote the production of cGMP although its potency is very low compared to brain natriuretic peptide 32. May have a role in cardio-renal homeostasis. Able to promote the production of cGMP. This Homo sapiens (Human) protein is Natriuretic peptides B (NPPB).